The following is a 111-amino-acid chain: Cell cycle protein GpsB (111 aa).

Positions 32 to 63 (LDDIMKDYDAYEAIIKELKGEIARLKAQAANS) form a coiled coil. A disordered region spans residues 59–80 (QAANSPKTTLPTEESNDVLRTE). A compositionally biased stretch (polar residues) spans 60-71 (AANSPKTTLPTE).

The protein belongs to the GpsB family. In terms of assembly, forms polymers through the coiled coil domains. Interacts with PBP1, MreC and EzrA.

It localises to the cytoplasm. Functionally, divisome component that associates with the complex late in its assembly, after the Z-ring is formed, and is dependent on DivIC and PBP2B for its recruitment to the divisome. Together with EzrA, is a key component of the system that regulates PBP1 localization during cell cycle progression. Its main role could be the removal of PBP1 from the cell pole after pole maturation is completed. Also contributes to the recruitment of PBP1 to the division complex. Not essential for septum formation. The polypeptide is Cell cycle protein GpsB (Streptococcus suis (strain 98HAH33)).